Consider the following 105-residue polypeptide: Ketoisovalerate oxidoreductase subunit VorD (105 aa).

4Fe-4S ferredoxin-type domains are found at residues 44–73 and 74–103; these read FMPVIDESKCVKCYICWKFCPEPAIYIKED and GFVAIDYDYCKGCGICANECPTKAITMVRE. [4Fe-4S] cluster-binding residues include Cys-53, Cys-56, Cys-59, Cys-63, Cys-83, Cys-86, Cys-89, and Cys-93.

Heterotetramer of one alpha, one beta, one delta and one gamma chain. The cofactor is [4Fe-4S] cluster.

The enzyme catalyses 3-methyl-2-oxobutanoate + 2 oxidized [2Fe-2S]-[ferredoxin] + CoA = 2-methylpropanoyl-CoA + 2 reduced [2Fe-2S]-[ferredoxin] + CO2 + H(+). The polypeptide is Ketoisovalerate oxidoreductase subunit VorD (vorD) (Pyrococcus abyssi (strain GE5 / Orsay)).